The following is a 255-amino-acid chain: uncharacterized protein (255 aa).

The signal sequence occupies residues 1-22 (MNILSPIIIIIILIVLFYVMRM).

This is an uncharacterized protein from Acanthamoeba polyphaga (Amoeba).